We begin with the raw amino-acid sequence, 311 residues long: MEKELEEYKSQLALVQISLQKTPQNEELQLLENDLKELISLTENLLQESVENDKNTFQNSQNGVAGFNTSKPVHIDFTPGNLVMARWVSGDYLFYPSRITAVSGFGANKKYTVQFLDYPDIETVSLKHIKAMPEEKRQEIEGNKEILKKSTTIRSTPVREPTKAISVASMSTSPSNYASRASSPDMKSSAAVTANVSPIQNVAQHVSTLPKISPIPPSNPPPVPSVSYSQKQQKQLKPKAALEASQNSWKQFAARGVKTGRVGKRKKIGESSIFKSTEDFPGRTNPKNFGNVARSGHREKHIYNYREDEDS.

The Tudor domain maps to aspartate 76–glutamate 139. 2 disordered regions span residues arginine 154 to serine 183 and serine 276 to serine 311. Polar residues predominate over residues alanine 168 to serine 183. Residue serine 173 is modified to Phosphoserine. Basic and acidic residues predominate over residues histidine 301–serine 311.

Belongs to the SMN family. Associates with spliceosomes.

The protein resides in the nucleus. Functionally, involved in spliceosome assembly. The chain is Splicing factor spf30 (spf30) from Schizosaccharomyces pombe (strain 972 / ATCC 24843) (Fission yeast).